Reading from the N-terminus, the 301-residue chain is Ribosomal protein L11 methyltransferase (301 aa).

4 residues coordinate S-adenosyl-L-methionine: threonine 146, glycine 167, aspartate 189, and asparagine 234.

The protein belongs to the methyltransferase superfamily. PrmA family.

The protein resides in the cytoplasm. It catalyses the reaction L-lysyl-[protein] + 3 S-adenosyl-L-methionine = N(6),N(6),N(6)-trimethyl-L-lysyl-[protein] + 3 S-adenosyl-L-homocysteine + 3 H(+). Its function is as follows. Methylates ribosomal protein L11. The sequence is that of Ribosomal protein L11 methyltransferase from Acinetobacter baumannii (strain AB307-0294).